Reading from the N-terminus, the 124-residue chain is Protein MGF 110-8L (124 aa).

Positions 1–16 (MKVLILVLLGVVILQA) are cleaved as a signal peptide. An N-linked (GlcNAc...) asparagine; by host glycan is attached at N76.

It belongs to the asfivirus MGF 110 family.

Plays a role in virus cell tropism, and may be required for efficient virus replication in macrophages. This chain is Protein MGF 110-8L, found in African swine fever virus (isolate Pig/Kenya/KEN-50/1950) (ASFV).